Consider the following 127-residue polypeptide: Major sperm protein isoform beta (127 aa).

Residue alanine 2 is modified to N-acetylalanine. Residues 9–126 (DINTQPGSKI…RRKNLPIEYN (118 aa)) enclose the MSP domain.

In terms of assembly, forms filaments 10 nm wide, with a characteristic substructure repeating axially at 9 nm. As to expression, sperm.

The protein resides in the cell projection. It is found in the pseudopodium. It localises to the cytoplasm. Its subcellular location is the cytoskeleton. Functionally, central component in molecular interactions underlying sperm crawling. Forms an extensive filament system that extends from sperm villipoda, along the leading edge of the pseudopod. The chain is Major sperm protein isoform beta from Ascaris suum (Pig roundworm).